A 641-amino-acid polypeptide reads, in one-letter code: MNIINLGILAHIDAGKTSVTENLLFASGATEKCGRVDNGDTITDSMDIEKRRGITVRASTTSIIWNGVKCNIIDTPGHMDFIAEVERTFKMLDGAVLILSAKEGIQAQTKLLFSTLQKLQIPTIIFINKIDRAGVNLERLYMDIKTNLSQDVLFMQTVVDGSVYPVCSQTYIKEEYKEFVCNHDDDILERYLADSEISPADYWNTIIALVAKAKVYPVLHGSAMFNIGINELLDAITSFILPPASVSNRLSAYLYKIEHDPKGHKRSFLKIIDGSLRLRDVVRINDSEKFIKIKNLKTIYQGREINVDEVGANDIAIVEDIEDFRIGDYLGAKPCLIQGLSHQHPALKCSVRPNKPEERSKVISALNTLWIEDPSLSFSINSYSDELEISLYGLTQKEIIQTLLEERFSVKVHFDEIKTIYKERPIKKVNKIIQIEVPPNPYWATIGLTLEPLPLGAGLQIESDISYGYLNHSFQNAVFEGIRMSCQSGLHGWEVTDLKVTFTQAEYYSPVSTPADFRQLTPYVFRLALQQSGVDILEPMLCFELQIPQVASSKAITDLQKMMSEIEDISCNNEWCHIKGKVPLNTSKDYASEVSSYTKGLGIFMVKPCGYQITKDGYSDNIRMNEKDKLLFMFQKSMSLK.

The 244-residue stretch at 1 to 244 (MNIINLGILA…AITSFILPPA (244 aa)) folds into the tr-type G domain. Residues 10–17 (AHIDAGKT), 74–78 (DTPGH), and 128–131 (NKID) contribute to the GTP site.

The protein belongs to the TRAFAC class translation factor GTPase superfamily. Classic translation factor GTPase family. TetM/TetO subfamily.

Functionally, abolishes the inhibitory effect of tetracyclin on protein synthesis by a non-covalent modification of the ribosomes. This Xylanibacter ruminicola (Prevotella ruminicola) protein is Tetracycline resistance protein TetQ (tetQ).